The following is a 592-amino-acid chain: Signal peptide peptidase-like 2B (592 aa).

A signal peptide spans 1–25 (MAAAVAAALARLLAAFLLLAAQVAC). The Lumenal portion of the chain corresponds to 26 to 174 (EYGMVHVVSQ…APKEPVLDYN (149 aa)). The PA domain maps to 71 to 149 (TASLLCSAAD…VALLSYKDML (79 aa)). N-linked (GlcNAc...) asparagine glycosylation is found at N97 and N129. The chain crosses the membrane as a helical span at residues 175 to 195 (MVIIFIMAVGTVAIGGYWAGS). Topologically, residues 196–221 (RDVKKRYMKHKRDDGPEKQEDEAVDV) are cytoplasmic. The helical transmembrane segment at 222–244 (TPVMTCVFVVMCCSMLVLLYYFY) threads the bilayer. Residues 245–248 (DLLV) lie on the Lumenal side of the membrane. The helical transmembrane segment at 249–271 (YVVIGIFCLASATGLYSCLAPCV) threads the bilayer. Residues 272 to 293 (RRLPFGKCRIPNNSLPYFHKRP) lie on the Cytoplasmic side of the membrane. A helical membrane pass occupies residues 294–314 (QARMLLLALFCVAVSVVWGVF). At 315–319 (RNEDQ) the chain is on the lumenal side. A helical transmembrane segment spans residues 320-340 (WAWVLQDALGIAFCLYMLKTI). Over 341–348 (RLPTFKAC) the chain is Cytoplasmic. A helical membrane pass occupies residues 349 to 369 (TLLLLVLFLYDIFFVFITPFL). D359 is a catalytic residue. Residues 370 to 412 (TKSGSSIMVEVATGPSDSATREKLPMVLKVPRLNSSPLALCDR) are Lumenal-facing. Residues 413–433 (PFSLLGFGDILVPGLLVAYCH) form a helical membrane-spanning segment. Residue D421 is part of the active site. Over 434–445 (RFDIQVQSSRVY) the chain is Cytoplasmic. The chain crosses the membrane as a helical span at residues 446 to 466 (FVACTIAYGVGLLVTFVALAL). Over 467–470 (MQRG) the chain is Lumenal. Residues 471–491 (QPALLYLVPCTLVTSCAVALW) form a helical membrane-spanning segment. The short motif at 472–474 (PAL) is the PAL element. Residues 492 to 592 (RRELGVFWTG…SPVTQPGASA (101 aa)) lie on the Cytoplasmic side of the membrane. The span at 512 to 524 (PWAPAPADGPQPP) shows a compositional bias: pro residues. Positions 512–592 (PWAPAPADGP…SPVTQPGASA (81 aa)) are disordered. A compositionally biased stretch (polar residues) spans 580–592 (AQPSPVTQPGASA).

This sequence belongs to the peptidase A22B family. In terms of assembly, monomer. Homodimer. Interacts with ITM2B. Interacts with TNF. Interacts with the simian foamy virus envelope glycoprotein gp130 and its processed leader peptide gp18LP; preferentially interacts with the leader peptide gp18LP. Post-translationally, glycosylated. In terms of tissue distribution, expressed predominantly in adrenal cortex and mammary gland.

The protein localises to the cell membrane. The protein resides in the golgi apparatus membrane. It localises to the lysosome membrane. It is found in the endosome membrane. Its subcellular location is the membrane. In terms of biological role, intramembrane-cleaving aspartic protease (I-CLiP) that cleaves type II membrane signal peptides in the hydrophobic plane of the membrane. Functions in ITM2B and TNF processing. Catalyzes the intramembrane cleavage of the anchored fragment of shed TNF-alpha (TNF), which promotes the release of the intracellular domain (ICD) for signaling to the nucleus. May play a role in the regulation of innate and adaptive immunity. Catalyzes the intramembrane cleavage of the simian foamy virus processed leader peptide gp18 of the envelope glycoprotein gp130 dependently of prior ectodomain shedding by furin or furin-like proprotein convertase (PC)-mediated cleavage proteolysis. The protein is Signal peptide peptidase-like 2B of Homo sapiens (Human).